Reading from the N-terminus, the 729-residue chain is FYN-binding protein 2 (729 aa).

Disordered regions lie at residues 18 to 130 (KFNA…EEKG), 170 to 320 (EGQK…SAEL), 371 to 408 (ELSPRPKEEENTMEEKESWESEPLEPRKELHPSRPPKV), and 469 to 490 (VTKETPSPSTIRSSSSSEKTYD). Polar residues-rich tracts occupy residues 69–81 (GVSQPLKNQTLKS), 89–99 (KTSSSSGTPEK), 190–216 (GAQTLPPQSHSMAQRKSPVTSKASSVS), and 226–240 (KSPATEGSHRSSQCQ). Positions 275–284 (GPPPPKPSKP) are enriched in pro residues. Basic and acidic residues predominate over residues 374–402 (PRPKEEENTMEEKESWESEPLEPRKELHP). The segment covering 473 to 485 (TPSPSTIRSSSSS) has biased composition (low complexity). Tyr-489 bears the Phosphotyrosine mark. The SH2-binding; to LCP2 motif lies at 520-523 (YEDI). Residues 576 to 603 (DLGPRSQDDSQDGIIYDDVDTREKESND) form a disordered region. Positions 584 to 593 (DSQDGIIYDD) are enriched in acidic residues. The residue at position 591 (Tyr-591) is a Phosphotyrosine. Residues 594–603 (VDTREKESND) are compositionally biased toward basic and acidic residues. In terms of domain architecture, SH3 spans 668–728 (LVINRAVACA…LVEHLDFKHQ (61 aa)).

As to quaternary structure, interacts with SKAP1, LCK and FYN. The phosphorylated form interacts with LCP2. In terms of processing, phosphorylation is required for its function in T-cell activation.

It is found in the membrane raft. In terms of biological role, adapter protein that plays a role in T-cell receptor (TCR)-mediated activation of signaling pathways. Required for T-cell activation and integrin-mediated T-cell adhesion in response to TCR stimulation. The chain is FYN-binding protein 2 from Mus musculus (Mouse).